The chain runs to 199 residues: Adenylyl-sulfate kinase (199 aa).

The interval 1–22 (MSESNHITWHDSEVTKKQRQHK) is disordered. 34–41 (GLSGSGKS) is a binding site for ATP. Residue Ser108 is the Phosphoserine intermediate of the active site.

It belongs to the APS kinase family.

The catalysed reaction is adenosine 5'-phosphosulfate + ATP = 3'-phosphoadenylyl sulfate + ADP + H(+). Its pathway is sulfur metabolism; hydrogen sulfide biosynthesis; sulfite from sulfate: step 2/3. Catalyzes the synthesis of activated sulfate. The chain is Adenylyl-sulfate kinase from Staphylococcus epidermidis (strain ATCC 12228 / FDA PCI 1200).